The chain runs to 236 residues: Zinc finger AN1 domain-containing stress-associated protein 13 (236 aa).

2 disordered regions span residues 48–81 (KEGR…PGKR) and 150–173 (TVPE…AKTK). Residues 66 to 75 (RLQLPTTSIV) show a composition bias toward polar residues. Residues 170–216 (AKTKSRCAACGRRVGLMGFECRCGAVFCGAHPLLGQARLWLRLQGRA) form an AN1-type; degenerate zinc finger. Zn(2+) is bound by residues C176, C179, C197, and H200.

Functionally, may be involved in environmental stress response. The chain is Zinc finger AN1 domain-containing stress-associated protein 13 (SAP13) from Oryza sativa subsp. japonica (Rice).